The primary structure comprises 226 residues: Uracil-DNA glycosylase (226 aa).

The active-site Proton acceptor is the Asp64.

The protein belongs to the uracil-DNA glycosylase (UDG) superfamily. UNG family.

Its subcellular location is the cytoplasm. The catalysed reaction is Hydrolyzes single-stranded DNA or mismatched double-stranded DNA and polynucleotides, releasing free uracil.. Its function is as follows. Excises uracil residues from the DNA which can arise as a result of misincorporation of dUMP residues by DNA polymerase or due to deamination of cytosine. The protein is Uracil-DNA glycosylase of Vibrio vulnificus (strain CMCP6).